Consider the following 123-residue polypeptide: Class I hydrophobin pri2 (123 aa).

The signal sequence occupies residues 1–18 (MVAIKSLAILALPVMAMA). 4 disulfide bridges follow: C31/C102, C38/C96, C39/C84, and C103/C116. 2 N-linked (GlcNAc...) asparagine glycosylation sites follow: N33 and N40.

This sequence belongs to the fungal hydrophobin family. In terms of assembly, self-assembles to form functional amyloid fibrils called rodlets. Self-assembly into fibrillar rodlets occurs spontaneously at hydrophobic:hydrophilic interfaces and the rodlets further associate laterally to form amphipathic monolayers.

It localises to the secreted. It is found in the cell wall. Its function is as follows. Aerial growth, conidiation, and dispersal of filamentous fungi in the environment rely upon a capability of their secreting small amphipathic proteins called hydrophobins (HPBs) with low sequence identity. Class I can self-assemble into an outermost layer of rodlet bundles on aerial cell surfaces, conferring cellular hydrophobicity that supports fungal growth, development and dispersal; whereas Class II form highly ordered films at water-air interfaces through intermolecular interactions but contribute nothing to the rodlet structure. This chain is Class I hydrophobin pri2, found in Cyclocybe aegerita (Black poplar mushroom).